The sequence spans 966 residues: Protein mes-1 (966 aa).

The signal sequence occupies residues 1-19 (MKIHHFLTLLCTFLPLTTT). At 20–470 (ALTNSTPLSL…QASDIPTSVE (451 aa)) the chain is on the extracellular side. N-linked (GlcNAc...) asparagine glycans are attached at residues N62, N126, N183, N214, N251, and N372. Residues 471-491 (LMAVVLATSAIFALIALFLLY) traverse the membrane as a helical segment. Residues 492-966 (RKRKRDKKAR…FKSVNVAATV (475 aa)) lie on the Cytoplasmic side of the membrane. The Protein kinase domain occupies 656–966 (HNFNERIEKQ…FKSVNVAATV (311 aa)). ATP is bound by residues 662 to 670 (IEKQAYWLM) and K685.

The protein belongs to the protein kinase superfamily.

The protein localises to the cell membrane. Functionally, during early embryogenesis, controls asymmetric cell division and the asymmetric localization of P granules of germline precursor P2 and its descendant P3. Probably upstream of tyrosine kinase src-1, plays a role in endoderm development by controlling spindle orientation during EMS blastomere cell division. Controls EMS spindle orientation probably by promoting lin-5 and gpr-1/2 enrichment at, and let-99 exclusion from the junction between P2 and EMS cells. The protein is Protein mes-1 of Caenorhabditis elegans.